A 240-amino-acid polypeptide reads, in one-letter code: Citrate synthase-lysine N-methyltransferase CSKMT, mitochondrial (240 aa).

The transit peptide at 1–28 (MAALRRMLHLPSLMMGTCRPFAGSLADS) directs the protein to the mitochondrion.

It belongs to the methyltransferase superfamily.

It is found in the mitochondrion. It carries out the reaction L-lysyl-[citrate synthase] + S-adenosyl-L-methionine = N(6)-methyl-L-lysyl-[citrate synthase] + S-adenosyl-L-homocysteine + H(+). It catalyses the reaction N(6)-methyl-L-lysyl-[citrate synthase] + S-adenosyl-L-methionine = N(6),N(6)-dimethyl-L-lysyl-[citrate synthase] + S-adenosyl-L-homocysteine + H(+). The enzyme catalyses N(6),N(6)-dimethyl-L-lysyl-[citrate synthase] + S-adenosyl-L-methionine = N(6),N(6),N(6)-trimethyl-L-lysyl-[citrate synthase] + S-adenosyl-L-homocysteine + H(+). With respect to regulation, citrate synthase-lysine methyltransferase activity is inhibited by S-adenosylhomocysteine (AdoHcy) and oxaloacetate (OAA). Protein-lysine methyltransferase that selectively trimethylates citrate synthase (CS) in mitochondria. Seems to conduct trimethylation in a highly distributive manner rather than in a processive manner, and thus introduces a single methyl group per binding event. This is Citrate synthase-lysine N-methyltransferase CSKMT, mitochondrial from Homo sapiens (Human).